The primary structure comprises 384 residues: Dual-specificity RNA methyltransferase RlmN (384 aa).

Residue Glu-93 is the Proton acceptor of the active site. The region spanning 99-339 (EETRGTLCVS…TTIRKTRGDD (241 aa)) is the Radical SAM core domain. Cys-106 and Cys-344 are oxidised to a cystine. 3 residues coordinate [4Fe-4S] cluster: Cys-113, Cys-117, and Cys-120. S-adenosyl-L-methionine contacts are provided by residues 170–171 (GE), Ser-202, 224–226 (SLH), and Asn-301. Catalysis depends on Cys-344, which acts as the S-methylcysteine intermediate.

Belongs to the radical SAM superfamily. RlmN family. The cofactor is [4Fe-4S] cluster.

It is found in the cytoplasm. It carries out the reaction adenosine(2503) in 23S rRNA + 2 reduced [2Fe-2S]-[ferredoxin] + 2 S-adenosyl-L-methionine = 2-methyladenosine(2503) in 23S rRNA + 5'-deoxyadenosine + L-methionine + 2 oxidized [2Fe-2S]-[ferredoxin] + S-adenosyl-L-homocysteine. It catalyses the reaction adenosine(37) in tRNA + 2 reduced [2Fe-2S]-[ferredoxin] + 2 S-adenosyl-L-methionine = 2-methyladenosine(37) in tRNA + 5'-deoxyadenosine + L-methionine + 2 oxidized [2Fe-2S]-[ferredoxin] + S-adenosyl-L-homocysteine. Its function is as follows. Specifically methylates position 2 of adenine 2503 in 23S rRNA and position 2 of adenine 37 in tRNAs. m2A2503 modification seems to play a crucial role in the proofreading step occurring at the peptidyl transferase center and thus would serve to optimize ribosomal fidelity. This is Dual-specificity RNA methyltransferase RlmN from Cupriavidus pinatubonensis (strain JMP 134 / LMG 1197) (Cupriavidus necator (strain JMP 134)).